The chain runs to 374 residues: Probable carboxylesterase 4, mitochondrial (374 aa).

Residues 1–52 constitute a mitochondrion transit peptide; the sequence is MLRRITCSSSLASPSLFLRFFRQLPRSYSSPTTIAVSGRNIRRLSTPTTLRC. The short motif at 135–137 is the Involved in the stabilization of the negatively charged intermediate by the formation of the oxyanion hole element; it reads HGG. Active-site residues include Ser219, Asp317, and His349.

It belongs to the 'GDXG' lipolytic enzyme family. In terms of tissue distribution, expressed in leaves, stems, flowers and siliques.

The protein localises to the mitochondrion. The catalysed reaction is a carboxylic ester + H2O = an alcohol + a carboxylate + H(+). In terms of biological role, carboxylesterase acting on esters with varying acyl chain length. This is Probable carboxylesterase 4, mitochondrial (CXE4) from Arabidopsis thaliana (Mouse-ear cress).